Here is a 152-residue protein sequence, read N- to C-terminus: MSTPARKRLMRDFKRLQQDPPAGISGAPQDNNIMLWNAVIFGPDDTPWDGGTFKLSLQFSEDYPNKPPTVRFVSRMFHPNIYADGSICLDILQNQWSPIYDVAAILTSIQSLLCDPNPNSPANSEAARMYSESKREYNRRVRDVVEQSWTAD.

Residues 4-150 form the UBC core domain; it reads PARKRLMRDF…VRDVVEQSWT (147 aa). C88 serves as the catalytic Glycyl thioester intermediate. Residues 119–152 form a disordered region; the sequence is NSPANSEAARMYSESKREYNRRVRDVVEQSWTAD. Residues 131–145 show a composition bias toward basic and acidic residues; it reads SESKREYNRRVRDVV.

The protein belongs to the ubiquitin-conjugating enzyme family. In terms of tissue distribution, ubiquitously expressed.

It catalyses the reaction S-ubiquitinyl-[E1 ubiquitin-activating enzyme]-L-cysteine + [E2 ubiquitin-conjugating enzyme]-L-cysteine = [E1 ubiquitin-activating enzyme]-L-cysteine + S-ubiquitinyl-[E2 ubiquitin-conjugating enzyme]-L-cysteine.. Its pathway is protein modification; protein ubiquitination. Functionally, accepts the ubiquitin from the E1 complex and catalyzes its covalent attachment to other proteins. The polypeptide is Ubiquitin-conjugating enzyme E2 1 (UBC1) (Arabidopsis thaliana (Mouse-ear cress)).